We begin with the raw amino-acid sequence, 163 residues long: Ribosome maturation factor RimP (163 aa).

Belongs to the RimP family.

It localises to the cytoplasm. Functionally, required for maturation of 30S ribosomal subunits. This is Ribosome maturation factor RimP from Streptococcus thermophilus (strain CNRZ 1066).